An 81-amino-acid polypeptide reads, in one-letter code: Photosystem I iron-sulfur center (81 aa).

4Fe-4S ferredoxin-type domains are found at residues 2-31 (SHSV…MIPW) and 39-68 (IAPA…VRVY). Residues Cys-11, Cys-14, Cys-17, Cys-21, Cys-48, Cys-51, Cys-54, and Cys-58 each coordinate [4Fe-4S] cluster.

As to quaternary structure, the eukaryotic PSI reaction center is composed of at least 11 subunits. The cofactor is [4Fe-4S] cluster.

It is found in the plastid. Its subcellular location is the chloroplast thylakoid membrane. The enzyme catalyses reduced [plastocyanin] + hnu + oxidized [2Fe-2S]-[ferredoxin] = oxidized [plastocyanin] + reduced [2Fe-2S]-[ferredoxin]. Its function is as follows. Apoprotein for the two 4Fe-4S centers FA and FB of photosystem I (PSI); essential for photochemical activity. FB is the terminal electron acceptor of PSI, donating electrons to ferredoxin. The C-terminus interacts with PsaA/B/D and helps assemble the protein into the PSI complex. Required for binding of PsaD and PsaE to PSI. PSI is a plastocyanin-ferredoxin oxidoreductase, converting photonic excitation into a charge separation, which transfers an electron from the donor P700 chlorophyll pair to the spectroscopically characterized acceptors A0, A1, FX, FA and FB in turn. In Drimys granadensis, this protein is Photosystem I iron-sulfur center.